The chain runs to 372 residues: tRNA-specific 2-thiouridylase MnmA (372 aa).

Residues 16-23 (GMSGGVDS) and methionine 42 contribute to the ATP site. The interaction with target base in tRNA stretch occupies residues 102–104 (NPD). The active-site Nucleophile is cysteine 107. Cysteine 107 and cysteine 205 are joined by a disulfide. ATP is bound at residue glycine 132. Residues 155–157 (KDQ) form an interaction with tRNA region. The Cysteine persulfide intermediate role is filled by cysteine 205. An interaction with tRNA region spans residues 317–318 (RY).

It belongs to the MnmA/TRMU family.

The protein localises to the cytoplasm. The enzyme catalyses S-sulfanyl-L-cysteinyl-[protein] + uridine(34) in tRNA + AH2 + ATP = 2-thiouridine(34) in tRNA + L-cysteinyl-[protein] + A + AMP + diphosphate + H(+). In terms of biological role, catalyzes the 2-thiolation of uridine at the wobble position (U34) of tRNA, leading to the formation of s(2)U34. This chain is tRNA-specific 2-thiouridylase MnmA, found in Shewanella baltica (strain OS195).